The primary structure comprises 320 residues: o-succinylbenzoate synthase (320 aa).

K133 (proton donor) is an active-site residue. The Mg(2+) site is built by D161, E190, and D213. Residue K235 is the Proton acceptor of the active site.

Belongs to the mandelate racemase/muconate lactonizing enzyme family. MenC type 1 subfamily. Requires a divalent metal cation as cofactor.

The enzyme catalyses (1R,6R)-6-hydroxy-2-succinyl-cyclohexa-2,4-diene-1-carboxylate = 2-succinylbenzoate + H2O. It participates in quinol/quinone metabolism; 1,4-dihydroxy-2-naphthoate biosynthesis; 1,4-dihydroxy-2-naphthoate from chorismate: step 4/7. Its pathway is quinol/quinone metabolism; menaquinone biosynthesis. Functionally, converts 2-succinyl-6-hydroxy-2,4-cyclohexadiene-1-carboxylate (SHCHC) to 2-succinylbenzoate (OSB). This Escherichia coli O157:H7 protein is o-succinylbenzoate synthase.